The chain runs to 1246 residues: DNA-directed RNA polymerase subunit beta (1246 aa).

Residues 1171-1246 (IDDDAGEMSL…EFDGYNDFKA (76 aa)) form a disordered region. Acidic residues-rich tracts occupy residues 1202-1223 (DEEE…EDFE) and 1230-1240 (EYAEDDDEFDG).

This sequence belongs to the RNA polymerase beta chain family. In terms of assembly, the RNAP catalytic core consists of 2 alpha, 1 beta, 1 beta' and 1 omega subunit. When a sigma factor is associated with the core the holoenzyme is formed, which can initiate transcription.

It carries out the reaction RNA(n) + a ribonucleoside 5'-triphosphate = RNA(n+1) + diphosphate. Functionally, DNA-dependent RNA polymerase catalyzes the transcription of DNA into RNA using the four ribonucleoside triphosphates as substrates. The polypeptide is DNA-directed RNA polymerase subunit beta (Alkaliphilus metalliredigens (strain QYMF)).